We begin with the raw amino-acid sequence, 149 residues long: Large ribosomal subunit protein bL9 (149 aa).

The protein belongs to the bacterial ribosomal protein bL9 family.

Its function is as follows. Binds to the 23S rRNA. The protein is Large ribosomal subunit protein bL9 of Mycoplasma pneumoniae (strain ATCC 29342 / M129 / Subtype 1) (Mycoplasmoides pneumoniae).